The primary structure comprises 365 residues: Forkhead box protein H1 (365 aa).

Residues 1–29 (MGPCSGSRLGPPEAESPSQPPKRRKKRYL) form a disordered region. The segment at residues 32 to 128 (DKPPYTYLAM…ALRLQNTALC (97 aa)) is a DNA-binding region (fork-head). The tract at residues 151-215 (GRPYRPPSPP…TPPLPSSERP (65 aa)) is disordered. The segment covering 154–164 (YRPPSPPPPPS) has biased composition (pro residues). The tract at residues 273-354 (LWGQLPTSYL…VSHPRDLAAP (82 aa)) is SMAD-interaction domain (SID). The short motif at 277-281 (LPTSY) is the Fast/FoxH1 motif 1 (FM1) element. The Fast/FoxH1 motif 2 (FM2) motif lies at 287–293 (PNVVMPL). Positions 327–348 (LDALFQGVPPNKSIYDVWVSHP) match the SMAD interaction motif (SIM) motif.

In terms of assembly, interacts with the MH2 domains of SMAD2 and SMAD3. As to expression, ubiquitous.

It is found in the nucleus. In terms of biological role, transcriptional activator. Recognizes and binds to the DNA sequence 5'-TGT[GT][GT]ATT-3'. Required for induction of the goosecoid (GSC) promoter by TGF-beta or activin signaling. Forms a transcriptionally active complex containing FOXH1/SMAD2/SMAD4 on a site on the GSC promoter called TARE (TGF-beta/activin response element). This Homo sapiens (Human) protein is Forkhead box protein H1 (FOXH1).